The sequence spans 174 residues: CASP-like protein 4D2 (174 aa).

At 1 to 14 (MAPPPPSPPAVSLK) the chain is on the cytoplasmic side. The helical transmembrane segment at 15-35 (VLLLLLRVLTGVFLVIALIIL) threads the bilayer. The Extracellular portion of the chain corresponds to 36 to 60 (STNSVTIVSQGSALKFHFKDVYAYR). The helical transmembrane segment at 61-81 (YMLSAAVIGLVYAVIQLFFTI) threads the bilayer. Residues 82 to 97 (SEFATGVKNPFNYQLD) are Cytoplasmic-facing. Residues 98–118 (FYGDKLISYLVATGSAAGFGV) traverse the membrane as a helical segment. Topologically, residues 119–150 (TKDLKDTFLALVALDSTDPVDKFFSKGYASAS) are extracellular. The helical transmembrane segment at 151 to 171 (LLLFAFICLAVLSVFSSFAMA) threads the bilayer. Topologically, residues 172-174 (KRN) are cytoplasmic.

Belongs to the Casparian strip membrane proteins (CASP) family. As to quaternary structure, homodimer and heterodimers.

The protein resides in the cell membrane. The chain is CASP-like protein 4D2 from Arabidopsis thaliana (Mouse-ear cress).